A 486-amino-acid polypeptide reads, in one-letter code: ATP-dependent rRNA helicase RRP3 (486 aa).

Residues 1–58 are disordered; sequence MNGAKRRKVAQDTPRNTKPVAQEKPARAEPKPSSDEESEEESATLEEPSAEETAVDAP. Residues 24–34 are compositionally biased toward basic and acidic residues; it reads KPARAEPKPSS. Residues 35–54 are compositionally biased toward acidic residues; it reads DEESEEESATLEEPSAEETA. A Q motif motif is present at residues 60–88; that stretch reads KTFKDLGVNDALCEACEKLNYKYPTPIQE. The Helicase ATP-binding domain maps to 91–262; it reads IPVALQGRDI…RASLRDPVKV (172 aa). ATP is bound at residue 104–111; sequence AETGSGKT. Positions 210-213 match the DEAD box motif; sequence DEAD. The region spanning 286–434 is the Helicase C-terminal domain; the sequence is QKDVHLIYLI…EYPTEKEEVM (149 aa). Composition is skewed to basic and acidic residues over residues 451–460 and 476–486; these read MKSFTEERGK and RGRDDMDREEG. A disordered region spans residues 451 to 486; that stretch reads MKSFTEERGKKGSTLKGGRGKKGGKRGRDDMDREEG.

This sequence belongs to the DEAD box helicase family. DDX47/RRP3 subfamily. In terms of assembly, interacts with the SSU processome.

It is found in the nucleus. It carries out the reaction ATP + H2O = ADP + phosphate + H(+). ATP-dependent rRNA helicase required for pre-ribosomal RNA processing. Involved in the maturation of the 35S-pre-rRNA and to its cleavage to mature 18S rRNA. The sequence is that of ATP-dependent rRNA helicase RRP3 from Gibberella zeae (strain ATCC MYA-4620 / CBS 123657 / FGSC 9075 / NRRL 31084 / PH-1) (Wheat head blight fungus).